Here is a 199-residue protein sequence, read N- to C-terminus: Probable GTP-binding protein EngB (199 aa).

An EngB-type G domain is found at 24-197; it reads EGYEVIFAGR…GARLNTFFGY (174 aa). GTP-binding positions include 32–39, 59–63, 77–80, 144–147, and 176–178; these read GRSNAGKS, GKTQH, DLPG, TKSD, and FSS. 2 residues coordinate Mg(2+): S39 and T61.

The protein belongs to the TRAFAC class TrmE-Era-EngA-EngB-Septin-like GTPase superfamily. EngB GTPase family. Requires Mg(2+) as cofactor.

Its function is as follows. Necessary for normal cell division and for the maintenance of normal septation. This is Probable GTP-binding protein EngB from Ruthia magnifica subsp. Calyptogena magnifica.